Consider the following 183-residue polypeptide: Translation initiation factor IF-3 (183 aa).

This sequence belongs to the IF-3 family. Monomer.

The protein resides in the cytoplasm. Its function is as follows. IF-3 binds to the 30S ribosomal subunit and shifts the equilibrium between 70S ribosomes and their 50S and 30S subunits in favor of the free subunits, thus enhancing the availability of 30S subunits on which protein synthesis initiation begins. This Pseudomonas aeruginosa (strain ATCC 15692 / DSM 22644 / CIP 104116 / JCM 14847 / LMG 12228 / 1C / PRS 101 / PAO1) protein is Translation initiation factor IF-3.